Consider the following 208-residue polypeptide: CKLF-like MARVEL transmembrane domain-containing protein 4 (208 aa).

Over residues 1–11 the composition is skewed to acidic residues; that stretch reads MRGGEELDGFE. A disordered region spans residues 1–38; it reads MRGGEELDGFEGEASSTSMISGASSPYQPTTEPVSQRR. Low complexity predominate over residues 15–25; sequence SSTSMISGASS. The region spanning 49-176 is the MARVEL domain; sequence YLRGALGRLK…STFLAMQKWR (128 aa). 4 helical membrane-spanning segments follow: residues 59 to 79, 85 to 105, 123 to 143, and 151 to 171; these read VAQVILALIAFICIETIMECS, YFFEFVSCSAFVVTGVLLILF, LVNTGLSTFFFFIASIVLAAL, and IAAVIFGFLATAAYAVSTFLA. A Phosphoserine modification is found at Ser194.

This sequence belongs to the chemokine-like factor family. Interacts with PD1L1 and CMTM6.

It is found in the membrane. Its function is as follows. Acts as a backup for CMTM6 to regulate plasma membrane expression of PD-L1/CD274, an immune inhibitory ligand critical for immune tolerance to self and antitumor immunity. May protect PD-L1/CD274 from being polyubiquitinated and targeted for degradation. The polypeptide is CKLF-like MARVEL transmembrane domain-containing protein 4 (Mus musculus (Mouse)).